The primary structure comprises 876 residues: GRB2-associated and regulator of MAPK protein (876 aa).

The interval 12–320 (KDVKWSPVAM…HQVKGDMWPE (309 aa)) is CABIT. Residue tyrosine 105 is modified to Phosphotyrosine. The tract at residues 427–448 (GDSGSDYLFPEANEESAGIPGK) is disordered. Phosphotyrosine is present on tyrosine 453. Disordered stretches follow at residues 460–501 (EGKP…ATLG) and 530–572 (LNAP…SYYS). A necessary for interaction with GRB2 region spans residues 498-550 (ATLGATIKSSEIALPPPPVPPKSEAVREECRLLNAPPVPPRSAKPLSTSPSIP). Positions 560 to 572 (QTRSPSPTLSYYS) are enriched in polar residues. Phosphoserine is present on residues serine 609 and serine 613. Composition is skewed to polar residues over residues 630–639 (SGASENQTRS) and 647–657 (RSYSYPRQKTP). Disordered stretches follow at residues 630–664 (SGAS…KRTC) and 722–759 (CPAL…TAGS). One can recognise an SAM domain in the interval 811 to 876 (LSIEEVSKSL…QFINGWRPKI (66 aa)).

The protein belongs to the GAREM family. As to quaternary structure, interacts with EGFR. Interacts (via proline-rich domain and phosphorylated at Tyr-105 and Tyr-453) with GRB2 (via SH3 domains); the interaction occurs upon EGF stimulation. Interacts (phosphorylated at Tyr-453) with PTPN11; the interaction increases MAPK/ERK activity and does not affect the GRB2/SOS complex formation. On EGF stimulation, phosphorylated on Tyr-105 and Tyr-453.

Its function is as follows. Acts as an adapter protein that plays a role in intracellular signaling cascades triggered either by the cell surface activated epidermal growth factor receptor and/or cytoplasmic protein tyrosine kinases. Promotes activation of the MAPK/ERK signaling pathway. Plays a role in the regulation of cell proliferation. The protein is GRB2-associated and regulator of MAPK protein (Garem1) of Mus musculus (Mouse).